The primary structure comprises 378 residues: Probable serine/threonine-protein kinase PBL7 (378 aa).

The interval 1–49 (MGWIPCSGKSSGRNKTRRNGDHKLDRKSSDCSVSTSEKSRAKSSLSESK) is disordered. The N-myristoyl glycine moiety is linked to residue G2. Basic and acidic residues predominate over residues 18–29 (RNGDHKLDRKSS). The segment covering 32–47 (SVSTSEKSRAKSSLSE) has biased composition (low complexity). Position 62 is a phosphothreonine (T62). Residues 73–350 (FRKECLIGEG…ADVVTALSYL (278 aa)) enclose the Protein kinase domain. Residues 79-87 (IGEGGFGRV) and K102 contribute to the ATP site. Phosphotyrosine is present on Y147. Catalysis depends on D200, which acts as the Proton acceptor. 2 positions are modified to phosphoserine: S204 and S234. Phosphothreonine is present on residues T235 and T240. Y248 bears the Phosphotyrosine mark.

It belongs to the protein kinase superfamily. Ser/Thr protein kinase family. In terms of assembly, interacts with BSU1 and BSL1. Phosphorylated at Ser-43, Ser-46 and Ser-234. Widely expressed.

It is found in the cell membrane. The catalysed reaction is L-seryl-[protein] + ATP = O-phospho-L-seryl-[protein] + ADP + H(+). The enzyme catalyses L-threonyl-[protein] + ATP = O-phospho-L-threonyl-[protein] + ADP + H(+). In terms of biological role, serine/threonine-protein kinase involved in the positive regulation of brassinosteroid (BR) signaling and plant growth. Phosphorylates both BSU1 and BSL1 in vitro. The sequence is that of Probable serine/threonine-protein kinase PBL7 from Arabidopsis thaliana (Mouse-ear cress).